A 431-amino-acid chain; its full sequence is Glutamate--tRNA ligase 1 (431 aa).

The 'HIGH' region signature appears at 11–21 (PSPTGDLHLGG). Positions 203–207 (KLSKR) match the 'KMSKS' region motif. Lys206 is an ATP binding site.

Belongs to the class-I aminoacyl-tRNA synthetase family. Glutamate--tRNA ligase type 1 subfamily. In terms of assembly, monomer.

Its subcellular location is the cytoplasm. It catalyses the reaction tRNA(Glu) + L-glutamate + ATP = L-glutamyl-tRNA(Glu) + AMP + diphosphate. Its function is as follows. Catalyzes the attachment of glutamate to tRNA(Glu) in a two-step reaction: glutamate is first activated by ATP to form Glu-AMP and then transferred to the acceptor end of tRNA(Glu). The protein is Glutamate--tRNA ligase 1 of Rubrobacter xylanophilus (strain DSM 9941 / JCM 11954 / NBRC 16129 / PRD-1).